The primary structure comprises 349 residues: Cbb3-type cytochrome c oxidase subunit CcoP (349 aa).

Residues 1 to 67 form a disordered region; it reads MADTDDEHAS…RVVRDRKGGR (67 aa). The Cytoplasmic portion of the chain corresponds to 1-96; that stretch reads MADTDDEHAS…NPLPRWWLWT (96 aa). A compositionally biased stretch (basic and acidic residues) spans 16 to 30; it reads NRIELERQAADEAHK. The chain crosses the membrane as a helical span at residues 97-117; sequence FYATIVWGVLYLIAYPAIPLV. Topologically, residues 118–349 are periplasmic; the sequence is NGATQGLLGQ…AYVHSLGGGE (232 aa). 2 Cytochrome c domains span residues 168–258 and 265–346; these read YTAN…LELG and ALAA…HSLG. Residues cysteine 181, cysteine 184, histidine 185, methionine 233, cysteine 278, cysteine 281, histidine 282, and methionine 323 each contribute to the heme c site.

Belongs to the CcoP / FixP family. As to quaternary structure, component of the cbb3-type cytochrome c oxidase at least composed of CcoN, CcoO, CcoQ and CcoP. Requires heme c as cofactor.

The protein resides in the cell inner membrane. Its pathway is energy metabolism; oxidative phosphorylation. Functionally, C-type cytochrome. Part of the cbb3-type cytochrome c oxidase complex. CcoP subunit is required for transferring electrons from donor cytochrome c via its heme groups to CcoO subunit. From there, electrons are shuttled to the catalytic binuclear center of CcoN subunit where oxygen reduction takes place. The complex also functions as a proton pump. In Paracoccus denitrificans (strain Pd 1222), this protein is Cbb3-type cytochrome c oxidase subunit CcoP.